Here is a 480-residue protein sequence, read N- to C-terminus: Glutamyl-tRNA(Gln) amidotransferase subunit A (480 aa).

Active-site charge relay system residues include Lys-70 and Ser-145. The active-site Acyl-ester intermediate is the Ser-169.

Belongs to the amidase family. GatA subfamily. Heterotrimer of A, B and C subunits.

It catalyses the reaction L-glutamyl-tRNA(Gln) + L-glutamine + ATP + H2O = L-glutaminyl-tRNA(Gln) + L-glutamate + ADP + phosphate + H(+). Functionally, allows the formation of correctly charged Gln-tRNA(Gln) through the transamidation of misacylated Glu-tRNA(Gln) in organisms which lack glutaminyl-tRNA synthetase. The reaction takes place in the presence of glutamine and ATP through an activated gamma-phospho-Glu-tRNA(Gln). The polypeptide is Glutamyl-tRNA(Gln) amidotransferase subunit A (Lactobacillus delbrueckii subsp. bulgaricus (strain ATCC 11842 / DSM 20081 / BCRC 10696 / JCM 1002 / NBRC 13953 / NCIMB 11778 / NCTC 12712 / WDCM 00102 / Lb 14)).